Here is a 313-residue protein sequence, read N- to C-terminus: Protoheme IX farnesyltransferase (313 aa).

9 consecutive transmembrane segments (helical) span residues L35 to L55, A56 to W76, V98 to L118, I120 to I140, I153 to G173, M180 to F200, I226 to F246, A248 to V268, and F285 to V305.

Belongs to the UbiA prenyltransferase family. Protoheme IX farnesyltransferase subfamily.

The protein resides in the cell inner membrane. It carries out the reaction heme b + (2E,6E)-farnesyl diphosphate + H2O = Fe(II)-heme o + diphosphate. Its pathway is porphyrin-containing compound metabolism; heme O biosynthesis; heme O from protoheme: step 1/1. In terms of biological role, converts heme B (protoheme IX) to heme O by substitution of the vinyl group on carbon 2 of heme B porphyrin ring with a hydroxyethyl farnesyl side group. In Rhodopseudomonas palustris (strain BisB18), this protein is Protoheme IX farnesyltransferase.